We begin with the raw amino-acid sequence, 166 residues long: MFPMVTEFMNYGQQTVRAARYIGQGFMITLSHANRLPVTIQYPYEKLITSERFRGRIHFEFDKCIACEVCVRVCPIDLPVVDWKLENDIRKKRLLNYSIDFGICIFCGNCVEYCPTNCLSMTEEYELSTYDRHELNYNQIALGRLPMSIIDDYTIRTILNLPEIKT.

4Fe-4S ferredoxin-type domains lie at 55–84 (GRIHFEFDKCIACEVCVRVCPIDLPVVDWK) and 95–124 (LNYSIDFGICIFCGNCVEYCPTNCLSMTEE). [4Fe-4S] cluster-binding residues include cysteine 64, cysteine 67, cysteine 70, cysteine 74, cysteine 104, cysteine 107, cysteine 110, and cysteine 114.

It belongs to the complex I 23 kDa subunit family. As to quaternary structure, NDH is composed of at least 16 different subunits, 5 of which are encoded in the nucleus. Requires [4Fe-4S] cluster as cofactor.

Its subcellular location is the plastid. It is found in the chloroplast thylakoid membrane. It carries out the reaction a plastoquinone + NADH + (n+1) H(+)(in) = a plastoquinol + NAD(+) + n H(+)(out). The catalysed reaction is a plastoquinone + NADPH + (n+1) H(+)(in) = a plastoquinol + NADP(+) + n H(+)(out). In terms of biological role, NDH shuttles electrons from NAD(P)H:plastoquinone, via FMN and iron-sulfur (Fe-S) centers, to quinones in the photosynthetic chain and possibly in a chloroplast respiratory chain. The immediate electron acceptor for the enzyme in this species is believed to be plastoquinone. Couples the redox reaction to proton translocation, and thus conserves the redox energy in a proton gradient. This Raillardella argentea (Silky raillardella) protein is NAD(P)H-quinone oxidoreductase subunit I, chloroplastic.